The chain runs to 144 residues: Superoxide dismutase [Mn], mitochondrial (144 aa).

Positions 10, 58, and 143 each coordinate Mn(2+).

This sequence belongs to the iron/manganese superoxide dismutase family. In terms of assembly, homotetramer. Mn(2+) serves as cofactor.

It localises to the mitochondrion matrix. It carries out the reaction 2 superoxide + 2 H(+) = H2O2 + O2. Its function is as follows. Destroys superoxide anion radicals which are normally produced within the cells and which are toxic to biological systems. The sequence is that of Superoxide dismutase [Mn], mitochondrial from Petromyzon marinus (Sea lamprey).